A 108-amino-acid chain; its full sequence is Malonate decarboxylase acyl carrier protein (108 aa).

Residue serine 35 is modified to O-(phosphoribosyl dephospho-coenzyme A)serine.

The protein belongs to the MdcC family. Covalently binds the prosthetic group of malonate decarboxylase.

The protein localises to the cytoplasm. Functionally, subunit of malonate decarboxylase, it is an acyl carrier protein to which acetyl and malonyl thioester residues are bound via a 2'-(5''-phosphoribosyl)-3'-dephospho-CoA prosthetic group and turn over during the catalytic mechanism. This chain is Malonate decarboxylase acyl carrier protein, found in Burkholderia cepacia (Pseudomonas cepacia).